A 425-amino-acid polypeptide reads, in one-letter code: Exodeoxyribonuclease 7 large subunit (425 aa).

The protein belongs to the XseA family. As to quaternary structure, heterooligomer composed of large and small subunits.

It is found in the cytoplasm. The enzyme catalyses Exonucleolytic cleavage in either 5'- to 3'- or 3'- to 5'-direction to yield nucleoside 5'-phosphates.. Functionally, bidirectionally degrades single-stranded DNA into large acid-insoluble oligonucleotides, which are then degraded further into small acid-soluble oligonucleotides. This is Exodeoxyribonuclease 7 large subunit from Nocardia farcinica (strain IFM 10152).